A 353-amino-acid chain; its full sequence is UPF0283 membrane protein YcjF (353 aa).

Positions 1–19 (MSEPLKPRIDFAEPLKEEP) are enriched in basic and acidic residues. The interval 1–35 (MSEPLKPRIDFAEPLKEEPTSAFKAQQTFSEAESR) is disordered. 3 helical membrane-spanning segments follow: residues 70-90 (MVMG…VQWT), 100-120 (VALG…GSVV), and 213-233 (ESTL…FIAW).

Belongs to the UPF0283 family.

It is found in the cell inner membrane. In Salmonella gallinarum (strain 287/91 / NCTC 13346), this protein is UPF0283 membrane protein YcjF.